We begin with the raw amino-acid sequence, 443 residues long: MSTSDSIVSSQTKQSSWRKSDTTWTLGLFGTAIGAGVLFFPIRAGFGGLIPILLMLVLAYPIAFYCHRALARLCLSGSNPSGNITETVEEHFGKTGGVVITFLYFFAICPLLWIYGVTITNTFMTFWENQLGFAPLNRGFVALFLLLLMAFVIWFGKDLMVKVMSYLVWPFIASLVLISLSLIPYWNSAVIDQVDLGSLSLTGHDGILITVWLGISIMVFSFNFSPIVSSFVVSKREEYEKDFGRDFTERKCSQIISRASMLMVAVVMFFAFSCLFTLSPANMAEAKAQNIPVLSYLANHFASMTGTKTTFAITLEYAASIIALVAIFKSFFGHYLGTLEGLNGLILKFGYKGDKTKVSLGKLNTISMIFIMGSTWVVAYANPNILDLIEAMGAPIIASLLCLLPMYAIRKAPSLAKYRGRLDNVFVTVIGLLTILNIVYKLF.

Transmembrane regions (helical) follow at residues 22–42, 44–64, 97–117, 140–160, 163–183, 207–227, 261–281, 311–331, 366–386, 389–409, and 423–443; these read TTWT…FFPI, AGFG…PIAF, GVVI…IYGV, FVAL…KDLM, VMSY…LSLI, ILIT…FSPI, MLMV…LSPA, FAIT…FKSF, ISMI…PNIL, IEAM…MYAI, and DNVF…YKLF.

Belongs to the amino acid/polyamine transporter 2 family. SdaC/TdcC subfamily.

Its subcellular location is the cell inner membrane. It catalyses the reaction L-threonine(in) + H(+)(in) = L-threonine(out) + H(+)(out). The enzyme catalyses L-serine(in) + H(+)(in) = L-serine(out) + H(+)(out). Functionally, involved in the import of threonine and serine into the cell, with the concomitant import of a proton (symport system). This is Threonine/serine transporter TdcC from Shigella boydii serotype 18 (strain CDC 3083-94 / BS512).